We begin with the raw amino-acid sequence, 125 residues long: Glycine cleavage system H protein (125 aa).

Positions 23 to 105 (VSTVGITEHA…FEGGWLFKVR (83 aa)) constitute a Lipoyl-binding domain. Position 64 is an N6-lipoyllysine (Lys-64).

This sequence belongs to the GcvH family. As to quaternary structure, the glycine cleavage system is composed of four proteins: P, T, L and H. Requires (R)-lipoate as cofactor.

The glycine cleavage system catalyzes the degradation of glycine. The H protein shuttles the methylamine group of glycine from the P protein to the T protein. The protein is Glycine cleavage system H protein of Streptomyces coelicolor (strain ATCC BAA-471 / A3(2) / M145).